Reading from the N-terminus, the 291-residue chain is Porphobilinogen deaminase (291 aa).

Cys-237 bears the S-(dipyrrolylmethanemethyl)cysteine mark.

It belongs to the HMBS family. In terms of assembly, monomer. Dipyrromethane is required as a cofactor.

The enzyme catalyses 4 porphobilinogen + H2O = hydroxymethylbilane + 4 NH4(+). It participates in porphyrin-containing compound metabolism; protoporphyrin-IX biosynthesis; coproporphyrinogen-III from 5-aminolevulinate: step 2/4. Its function is as follows. Tetrapolymerization of the monopyrrole PBG into the hydroxymethylbilane pre-uroporphyrinogen in several discrete steps. The protein is Porphobilinogen deaminase of Clostridium acetobutylicum (strain ATCC 824 / DSM 792 / JCM 1419 / IAM 19013 / LMG 5710 / NBRC 13948 / NRRL B-527 / VKM B-1787 / 2291 / W).